A 369-amino-acid polypeptide reads, in one-letter code: Arsenite methyltransferase (369 aa).

The residue at position 46 (Ser46) is a Phosphoserine.

Belongs to the methyltransferase superfamily. Arsenite methyltransferase family.

The protein localises to the cytoplasm. It is found in the cytosol. It catalyses the reaction arsenic triglutathione + [thioredoxin]-dithiol + S-adenosyl-L-methionine + 2 H2O = methylarsonous acid + [thioredoxin]-disulfide + 3 glutathione + S-adenosyl-L-homocysteine + H(+). It carries out the reaction arsenic triglutathione + 2 [thioredoxin]-dithiol + 2 S-adenosyl-L-methionine + H2O = dimethylarsinous acid + 2 [thioredoxin]-disulfide + 3 glutathione + 2 S-adenosyl-L-homocysteine + 2 H(+). The enzyme catalyses arsenic triglutathione + 3 [thioredoxin]-dithiol + 3 S-adenosyl-L-methionine = trimethylarsine + 3 [thioredoxin]-disulfide + 3 glutathione + 3 S-adenosyl-L-homocysteine + 3 H(+). Functionally, catalyzes the transfer of a methyl group from AdoMet to trivalent arsenicals producing methylated and dimethylated arsenicals. It methylates arsenite to form methylarsonate, Me-AsO(3)H(2), which is reduced by methylarsonate reductase to methylarsonite, Me-As(OH)2. Methylarsonite is also a substrate and it is converted into the much less toxic compound dimethylarsinate (cacodylate), Me(2)As(O)-OH. In Rattus norvegicus (Rat), this protein is Arsenite methyltransferase (As3mt).